The sequence spans 108 residues: Phosphoribosyl-ATP pyrophosphatase (108 aa).

It belongs to the PRA-PH family.

It is found in the cytoplasm. The enzyme catalyses 1-(5-phospho-beta-D-ribosyl)-ATP + H2O = 1-(5-phospho-beta-D-ribosyl)-5'-AMP + diphosphate + H(+). It participates in amino-acid biosynthesis; L-histidine biosynthesis; L-histidine from 5-phospho-alpha-D-ribose 1-diphosphate: step 2/9. This is Phosphoribosyl-ATP pyrophosphatase from Aromatoleum aromaticum (strain DSM 19018 / LMG 30748 / EbN1) (Azoarcus sp. (strain EbN1)).